Consider the following 457-residue polypeptide: Adenylosuccinate synthetase isozyme 1 (457 aa).

The interval 1 to 25 (MSGTRASNDRPPSAGGVKRGRLQHE) is disordered. Residues 42–48 (GDEGKGK) and 70–72 (GHT) contribute to the GTP site. The active-site Proton acceptor is D43. Residues D43 and G70 each coordinate Mg(2+). D43 is a binding site for substrate. Residues 43 to 46 (DEGK), 68 to 71 (NAGH), T163, R177, N256, T271, and R335 each bind IMP. The Proton donor role is filled by H71. Substrate is bound at residue 331–337 (VTTGRKR). Residues R337, 363-365 (KLD), and 445-448 (GVGK) contribute to the GTP site.

The protein belongs to the adenylosuccinate synthetase family. Homodimer. It depends on Mg(2+) as a cofactor.

It is found in the cytoplasm. It carries out the reaction IMP + L-aspartate + GTP = N(6)-(1,2-dicarboxyethyl)-AMP + GDP + phosphate + 2 H(+). The protein operates within purine metabolism; AMP biosynthesis via de novo pathway; AMP from IMP: step 1/2. Functionally, component of the purine nucleotide cycle (PNC), which interconverts IMP and AMP to regulate the nucleotide levels in various tissues, and which contributes to glycolysis and ammoniagenesis. Catalyzes the first committed step in the biosynthesis of AMP from IMP. The chain is Adenylosuccinate synthetase isozyme 1 from Bos taurus (Bovine).